A 172-amino-acid polypeptide reads, in one-letter code: Early E3 18.5 kDa glycoprotein (172 aa).

The first 19 residues, 1-19, serve as a signal peptide directing secretion; it reads MGAILVVLALLSLLGLGSA. At 20-136 the chain is on the lumenal side; the sequence is NLNPLDHDPC…SKENIVAFSI (117 aa). N-linked (GlcNAc...) asparagine; by host glycosylation occurs at Asn36. Disulfide bonds link Cys37-Cys55 and Cys49-Cys111. Asn68, Asn72, and Asn102 each carry an N-linked (GlcNAc...) asparagine; by host glycan. The chain crosses the membrane as a helical span at residues 137 to 157; sequence AYCLVTCIITAIICVCIHLLI. Over 158-172 the chain is Cytoplasmic; that stretch reads VIRPRQSNEEKEKMP. Residues 168–172 carry the Di-lysine motif motif; the sequence is KEKMP.

The protein belongs to the adenoviridae E19 family. Both disulfide bonds are absolutely critical for the interaction with MHC antigens. Post-translationally, N-glycosylated; high-mannose.

It localises to the host endoplasmic reticulum membrane. Functionally, binds and retains class I heavy chains in the endoplasmic reticulum during the early period of virus infection, thereby impairing their transport to the cell surface. Also delays the expression of class I alleles that it cannot affect by direct retention. Binds transporters associated with antigen processing (TAP) and acts as a tapasin inhibitor, preventing class I/TAP association. In consequence, infected cells are masked for immune recognition by cytotoxic T-lymphocytes. The sequence is that of Early E3 18.5 kDa glycoprotein from Human adenovirus B serotype 3 (HAdV-3).